The primary structure comprises 400 residues: Unsaturated glucuronyl hydrolase (400 aa).

Residues 1–20 (MRKLVYLVLVLGLTFLNVRC) form the signal peptide. Catalysis depends on aspartate 120, which acts as the Nucleophile. The active-site Proton donor is the aspartate 181.

The protein belongs to the glycosyl hydrolase 88 family.

It is found in the cell surface. Functionally, unsaturated glucuronyl hydrolase involved in ulvan degradation. Ulvan is the main polysaccharide component of the Ulvales (green seaweed) cell wall. It is composed of disaccharide building blocks comprising 3-sulfated rhamnose (Rha3S) linked to D-glucuronic acid (GlcA), L-iduronic acid (IduA), or D-xylose (Xyl). Unsaturated glucuronyl hydrolase catalyzes the cleavage of the unsaturated 4-deoxy-L-threo-hex-4-enopyranosiduronic acid (deltaUA) at the non-reducing end of ulvan oligomers, thus forming 5-dehydro-4-deoxy-D-glucuronate. This Formosa agariphila (strain DSM 15362 / KCTC 12365 / LMG 23005 / KMM 3901 / M-2Alg 35-1) protein is Unsaturated glucuronyl hydrolase.